The following is a 499-amino-acid chain: Alpha-amylase A type-1/2 (499 aa).

The N-terminal stretch at 1 to 21 (MMVAWWSLFLYGLQVAAPALA) is a signal peptide. Cysteines 51 and 59 form a disulfide. Glutamine 56 and tryptophan 104 together coordinate substrate. Residue asparagine 142 participates in Ca(2+) binding. Position 143 (histidine 143) interacts with substrate. Residues cysteine 171 and cysteine 185 are joined by a disulfide bond. Ca(2+)-binding residues include glutamate 183 and aspartate 196. Asparagine 218 is a glycosylation site (N-linked (GlcNAc...) asparagine). Arginine 225 is a substrate binding site. Ca(2+)-binding residues include aspartate 227, histidine 231, and glutamate 251. Aspartate 227 (nucleophile) is an active-site residue. 230-231 (KH) contributes to the substrate binding site. Glutamate 251 acts as the Proton donor in catalysis. Glycine 255 lines the substrate pocket. An intrachain disulfide couples cysteine 261 to cysteine 304. Residues aspartate 318 and arginine 365 each coordinate substrate. An intrachain disulfide couples cysteine 461 to cysteine 496.

This sequence belongs to the glycosyl hydrolase 13 family. As to quaternary structure, monomer. The cofactor is Ca(2+).

It localises to the secreted. It catalyses the reaction Endohydrolysis of (1-&gt;4)-alpha-D-glucosidic linkages in polysaccharides containing three or more (1-&gt;4)-alpha-linked D-glucose units.. In Aspergillus oryzae (strain ATCC 42149 / RIB 40) (Yellow koji mold), this protein is Alpha-amylase A type-1/2 (amy1).